Reading from the N-terminus, the 540-residue chain is Chaperonin GroEL (540 aa).

Residues 29 to 32 (TLGP), 86 to 90 (DGTTT), glycine 413, 476 to 478 (NAA), and aspartate 492 each bind ATP.

Belongs to the chaperonin (HSP60) family. Forms a cylinder of 14 subunits composed of two heptameric rings stacked back-to-back. Interacts with the co-chaperonin GroES.

The protein localises to the cytoplasm. The catalysed reaction is ATP + H2O + a folded polypeptide = ADP + phosphate + an unfolded polypeptide.. Its function is as follows. Together with its co-chaperonin GroES, plays an essential role in assisting protein folding. The GroEL-GroES system forms a nano-cage that allows encapsulation of the non-native substrate proteins and provides a physical environment optimized to promote and accelerate protein folding. This Tsukamurella paurometabola (Corynebacterium paurometabolum) protein is Chaperonin GroEL.